We begin with the raw amino-acid sequence, 941 residues long: Pre-mRNA-processing factor 6 (941 aa).

Residues 1–79 (MNKKKKPFLG…DEDLNDTNYD (79 aa)) are disordered. Residues 39–65 (DANDPVDDRHAPPGKRTVGDQMKKNQA) are compositionally biased toward basic and acidic residues. Over residues 66–78 (ADDDDEDLNDTNY) the composition is skewed to acidic residues. Serine 143 carries the phosphoserine modification. Residues threonine 180, threonine 266, and threonine 275 each carry the phosphothreonine modification. Serine 279 is subject to Phosphoserine. HAT repeat units lie at residues 384 to 416 (TDIR…LEEP), 418 to 444 (DARI…ARLE), 445 to 476 (TYEN…LEEA), 554 to 586 (NALE…FEKN), 588 to 620 (GTRE…SKWL), 622 to 654 (GDVP…LESE), 689 to 721 (GNIS…IEEQ), 723 to 755 (ELME…LEEK), and 855 to 887 (RKIT…FELQ).

In terms of assembly, identified in the spliceosome B complex. Identified in the spliceosome C complex. Associates with the U5 snRNP particle. Component of the U4/U6-U5 tri-snRNP complex composed of the U4, U6 and U5 snRNAs and at least PRPF3, PRPF4, PRPF6, PRPF8, PRPF31, SNRNP200, TXNL4A, SNRNP40, DDX23, CD2BP2, PPIH, SNU13, EFTUD2, SART1 and USP39, LSm proteins LSm2-8 and Sm proteins. Interacts with ARAF1. Interacts with AR and NR3C1, but not ESR1, independently of the presence of hormones. Interacts with USH1G. Post-translationally, phosphorylated by PRP4K during spliceosome assembly.

The protein localises to the nucleus. Its subcellular location is the nucleoplasm. The protein resides in the nucleus speckle. Involved in pre-mRNA splicing as component of the U4/U6-U5 tri-snRNP complex, one of the building blocks of the spliceosome. Enhances dihydrotestosterone-induced transactivation activity of AR, as well as dexamethasone-induced transactivation activity of NR3C1, but does not affect estrogen-induced transactivation. The protein is Pre-mRNA-processing factor 6 (Prpf6) of Mus musculus (Mouse).